Reading from the N-terminus, the 1611-residue chain is DNA (cytosine-5)-methyltransferase 1 (1611 aa).

An interaction with DMAP1 region spans residues 1-120 (MPARTAPARV…SQTSGEDCRV (120 aa)). The segment at 1–148 (MPARTAPARV…RRSKSDGETK (148 aa)) is interaction with DNMT3A. 2 interaction with the PRC2/EED-EZH2 complex regions span residues 1 to 334 (MPAR…TEKK) and 306 to 603 (KPQV…TIRQ). The residue at position 15 (serine 15) is a Phosphoserine. Residues 16-109 (RAFSLPDDVR…SREANGCLEN (94 aa)) enclose the DMAP1-binding domain. Lysine 70 carries the post-translational modification N6,N6-dimethyllysine; by EHMT2. Residues 123–328 (AEKGKPPKPV…EEKRRRTTYR (206 aa)) are disordered. A Phosphoserine modification is found at serine 133. Position 137 is a phosphothreonine (threonine 137). At serine 141 the chain carries Phosphoserine. Lysine 142 is subject to N6-methyllysine; by SETD7. Phosphoserine; by PKB/AKT1 is present on serine 143. Residues 149-216 (SEVSSSPRIT…TSRERVAGLL (68 aa)) are interaction with DNMT3B. A phosphoserine mark is found at serine 152 and serine 154. The residue at position 160 (lysine 160) is an N6-acetyllysine. Positions 163–174 (RQTTITSHFPRG) are interaction with PCNA. Over residues 163-174 (RQTTITSHFPRG) the composition is skewed to low complexity. Residue threonine 166 is modified to Phosphothreonine. Positions 177–204 (KRKPEEEPEKVKSDDSVDEEKDQEEKRR) match the Nuclear localization signal motif. Basic and acidic residues-rich tracts occupy residues 178–191 (RKPEEEPEKVKSDD), 199–212 (QEEKRRRVTSRERV), 220–265 (EPGR…RDVR), 279–311 (KDEKRHRSQPKDLASKRRPEEKEPERVKPQVSD), and 319–328 (EEKRRRTTYR). Lysine 188 carries the post-translational modification N6-acetyllysine. An N6-acetyllysine; alternate modification is found at lysine 257. Lysine 257 is covalently cross-linked (Glycyl lysine isopeptide (Lys-Gly) (interchain with G-Cter in SUMO2); alternate). Serine 310 is modified (phosphoserine). The tract at residues 329-548 (ELTEKKMTRT…NLNRFTEDSL (220 aa)) is DNA replication foci-targeting sequence. Residues cysteine 351 and cysteine 354 each coordinate Zn(2+). Serine 392 and serine 396 each carry phosphoserine. Zn(2+) is bound by residues cysteine 412 and histidine 416. 2 positions are modified to phosphoserine: serine 507 and serine 547. The interval 594-614 (RAERRQTIRQPAKEKDKGPTK) is disordered. A CXXC-type zinc finger spans residues 643–689 (NAFKRRRCGVCEICQQPECGKCKACKDMVKFGGSGRSKQACQKRRCP). Zn(2+) contacts are provided by cysteine 650, cysteine 653, cysteine 656, cysteine 661, cysteine 664, cysteine 667, cysteine 683, and cysteine 688. An autoinhibitory linker region spans residues 690–751 (NMAMKEADDD…SYYKKVCIDS (62 aa)). The interval 695–726 (EADDDEEVDDNIPEMPSPKKMHQGKKKKQNKN) is disordered. The span at 696-706 (ADDDEEVDDNI) shows a compositional bias: acidic residues. Position 711 is a phosphoserine (serine 711). Residues 713–725 (KKMHQGKKKKQNK) are compositionally biased toward basic residues. Serine 729 carries the phosphoserine modification. At lysine 746 the chain carries N6-acetyllysine. The BAH 1 domain occupies 752–877 (ETLEVGDCVS…QDYARFESPP (126 aa)). At serine 875 the chain carries Phosphoserine. Residues lysine 888, lysine 954, lysine 958, lysine 972, and lysine 1051 each carry the N6-acetyllysine modification. The 129-residue stretch at 969–1097 (HYRKYSDYIK…AKSKSFEDPP (129 aa)) folds into the BAH 2 domain. Residues 1091–1126 (KSFEDPPNHARSTGNKGKGKGKGKNRTKSQTCEPSE) form a disordered region. 4 tandem repeats follow at residues 1106-1107 (KG), 1108-1109 (KG), 1110-1111 (KG), and 1112-1113 (KG). Residues 1106–1115 (KGKGKGKGKN) form a 5 X 2 AA tandem repeats of K-G region. Residues 1107 to 1117 (GKGKGKGKNRT) show a composition bias toward basic residues. N6-acetyllysine is present on residues lysine 1108, lysine 1110, lysine 1112, lysine 1114, and lysine 1118. One copy of the 5; approximate repeat lies at 1114-1115 (KN). The segment at 1118 to 1611 (KSQTCEPSEL…AKIKEEAAKD (494 aa)) is interaction with the PRC2/EED-EZH2 complex. Residues 1136 to 1595 (LRTLDVFSGC…LEIKRCMLAK (460 aa)) form the SAM-dependent MTase C5-type domain. The interval 1136-1611 (LRTLDVFSGC…AKIKEEAAKD (476 aa)) is catalytic. S-adenosyl-L-methionine is bound by residues serine 1143, 1147-1148 (GL), 1165-1166 (EM), 1187-1188 (DC), and cysteine 1188. Cysteine 1223 is a catalytic residue. An N6-acetyllysine mark is found at lysine 1346 and lysine 1412. S-adenosyl-L-methionine contacts are provided by asparagine 1574 and valine 1576. Lysine 1605 is covalently cross-linked (Glycyl lysine isopeptide (Lys-Gly) (interchain with G-Cter in SUMO2)).

The protein belongs to the class I-like SAM-binding methyltransferase superfamily. C5-methyltransferase family. Homodimer. Forms a stable complex with E2F1, BB1 and HDAC1. Forms a complex with DMAP1 and HDAC2, with direct interaction. Interacts with the PRC2/EED-EZH2 complex. Probably part of a corepressor complex containing ZNF304, TRIM28, SETDB1 and DNMT1. Interacts with UHRF1; promoting its recruitment to hemimethylated DNA. Interacts with USP7, promoting its deubiquitination. Interacts with PCNA. Interacts with MBD2 and MBD3. Interacts with DNMT3A and DNMT3B. Interacts with UBC9. Interacts with CSNK1D. Interacts with HDAC1. Interacts with BAZ2A/TIP5. Interacts with SIRT7. Interacts with ZNF263; recruited to the SIX3 promoter along with other proteins involved in chromatin modification and transcriptional corepression where it contributes to transcriptional repression. Interacts with L3MBTL3 and DCAF5; the interaction requires DNMT1 methylation at Lys-142 and is necessary to target DNMT1 for ubiquitination by the CRL4-DCAF5 E3 ubiquitin ligase complex and proteasomal degradation. Interacts with PHF20L1; the interaction requires DNMT1 methylation at Lys-142 and protects DNMT1 from ubiquitination and proteasomal degradation. In terms of processing, sumoylated; sumoylation increases activity. Acetylation on multiple lysines, mainly by KAT2B/PCAF, regulates cell cycle G(2)/M transition. Deacetylation of Lys-1346 and Lys-1412 by SIRT1 increases methyltransferase activity. Post-translationally, phosphorylation of Ser-154 by CDKs is important for enzymatic activity and protein stability. Phosphorylation of Ser-143 by AKT1 prevents methylation by SETD7 thereby increasing DNMT1 stability. In terms of processing, methylation at Lys-142 by SETD7 is necessary for the regulation of DNMT1 proteasomal degradation. Ubiquitinated by UHRF1; interaction with USP7 counteracts ubiquitination by UHRF1 by promoting deubiquitination and preventing degradation by the proteasome.

It is found in the nucleus. The catalysed reaction is a 2'-deoxycytidine in DNA + S-adenosyl-L-methionine = a 5-methyl-2'-deoxycytidine in DNA + S-adenosyl-L-homocysteine + H(+). Methylates CpG residues. Preferentially methylates hemimethylated DNA. Associates with DNA replication sites in S phase maintaining the methylation pattern in the newly synthesized strand, that is essential for epigenetic inheritance. Associates with chromatin during G2 and M phases to maintain DNA methylation independently of replication. It is responsible for maintaining methylation patterns established in development. DNA methylation is coordinated with methylation of histones. Mediates transcriptional repression by direct binding to HDAC2. In association with DNMT3B and via the recruitment of CTCFL/BORIS, involved in activation of BAG1 gene expression by modulating dimethylation of promoter histone H3 at H3K4 and H3K9. Probably forms a corepressor complex required for activated KRAS-mediated promoter hypermethylation and transcriptional silencing of tumor suppressor genes (TSGs) or other tumor-related genes in colorectal cancer (CRC) cells. Also required to maintain a transcriptionally repressive state of genes in undifferentiated embryonic stem cells (ESCs). Associates at promoter regions of tumor suppressor genes (TSGs) leading to their gene silencing. Promotes tumor growth. This chain is DNA (cytosine-5)-methyltransferase 1 (DNMT1), found in Bos taurus (Bovine).